The primary structure comprises 295 residues: Bifunctional protein FolD (295 aa).

NADP(+) contacts are provided by residues 175-177 (GVS) and Ile243.

It belongs to the tetrahydrofolate dehydrogenase/cyclohydrolase family. As to quaternary structure, homodimer.

It catalyses the reaction (6R)-5,10-methylene-5,6,7,8-tetrahydrofolate + NADP(+) = (6R)-5,10-methenyltetrahydrofolate + NADPH. The enzyme catalyses (6R)-5,10-methenyltetrahydrofolate + H2O = (6R)-10-formyltetrahydrofolate + H(+). The protein operates within one-carbon metabolism; tetrahydrofolate interconversion. Its function is as follows. Catalyzes the oxidation of 5,10-methylenetetrahydrofolate to 5,10-methenyltetrahydrofolate and then the hydrolysis of 5,10-methenyltetrahydrofolate to 10-formyltetrahydrofolate. This chain is Bifunctional protein FolD, found in Xylella fastidiosa (strain 9a5c).